The primary structure comprises 210 residues: Na(+)-translocating NADH-quinone reductase subunit D (210 aa).

The next 6 helical transmembrane spans lie at 14–34, 42–62, 72–92, 103–123, 131–151, and 178–198; these read PIVS…ALAV, LVMT…ISML, IIVQ…VLQA, VFVG…AYAM, FMDG…VGFV, and NGLL…IWII.

This sequence belongs to the NqrDE/RnfAE family. Composed of six subunits; NqrA, NqrB, NqrC, NqrD, NqrE and NqrF.

Its subcellular location is the cell inner membrane. It carries out the reaction a ubiquinone + n Na(+)(in) + NADH + H(+) = a ubiquinol + n Na(+)(out) + NAD(+). In terms of biological role, NQR complex catalyzes the reduction of ubiquinone-1 to ubiquinol by two successive reactions, coupled with the transport of Na(+) ions from the cytoplasm to the periplasm. NqrA to NqrE are probably involved in the second step, the conversion of ubisemiquinone to ubiquinol. This is Na(+)-translocating NADH-quinone reductase subunit D from Shewanella woodyi (strain ATCC 51908 / MS32).